We begin with the raw amino-acid sequence, 166 residues long: Crossover junction endodeoxyribonuclease RuvC (166 aa).

Residues aspartate 12, glutamate 71, and aspartate 143 contribute to the active site. Residues aspartate 12, glutamate 71, and aspartate 143 each contribute to the Mg(2+) site.

This sequence belongs to the RuvC family. Homodimer which binds Holliday junction (HJ) DNA. The HJ becomes 2-fold symmetrical on binding to RuvC with unstacked arms; it has a different conformation from HJ DNA in complex with RuvA. In the full resolvosome a probable DNA-RuvA(4)-RuvB(12)-RuvC(2) complex forms which resolves the HJ. Mg(2+) is required as a cofactor.

It is found in the cytoplasm. It catalyses the reaction Endonucleolytic cleavage at a junction such as a reciprocal single-stranded crossover between two homologous DNA duplexes (Holliday junction).. Its function is as follows. The RuvA-RuvB-RuvC complex processes Holliday junction (HJ) DNA during genetic recombination and DNA repair. Endonuclease that resolves HJ intermediates. Cleaves cruciform DNA by making single-stranded nicks across the HJ at symmetrical positions within the homologous arms, yielding a 5'-phosphate and a 3'-hydroxyl group; requires a central core of homology in the junction. The consensus cleavage sequence is 5'-(A/T)TT(C/G)-3'. Cleavage occurs on the 3'-side of the TT dinucleotide at the point of strand exchange. HJ branch migration catalyzed by RuvA-RuvB allows RuvC to scan DNA until it finds its consensus sequence, where it cleaves and resolves the cruciform DNA. This Oleidesulfovibrio alaskensis (strain ATCC BAA-1058 / DSM 17464 / G20) (Desulfovibrio alaskensis) protein is Crossover junction endodeoxyribonuclease RuvC.